We begin with the raw amino-acid sequence, 463 residues long: Polyadenylate-binding protein-interacting protein 1 (463 aa).

The disordered stretch occupies residues 1-86; it reads MSDGFERAPG…HKRTSPAAQL (86 aa). The MIF4G domain occupies 145–362; the sequence is TEYVQDFLNH…LKLVELRSSN (218 aa). The segment at 420 to 442 is disordered; the sequence is RDYDENGTDGGDSYFEDDDDNEM. Positions 433 to 442 are enriched in acidic residues; the sequence is YFEDDDDNEM.

As to quaternary structure, interacts with the RRM1-RRM2 and C-terminal regions of epabp.

The protein resides in the cytoplasm. Functionally, acts as a coactivator in the regulation of translation initiation of poly(A)-containing mRNAs. This is Polyadenylate-binding protein-interacting protein 1 from Xenopus laevis (African clawed frog).